The chain runs to 280 residues: Late embryogenesis abundant protein 76 (280 aa).

Disordered regions lie at residues Met1–Val156 and Glu220–Thr241. The segment covering Met28–Thr39 has biased composition (basic and acidic residues). 5 LEA 11-mer repeat repeats span residues Lys31–Gln41, Thr53–Gln63, Thr75–Gln85, Thr97–Gln107, and Thr119–Gln129. The span at Ser40–Gln114 shows a compositional bias: low complexity. 2 stretches are compositionally biased toward basic and acidic residues: residues Lys115–Thr127 and Glu136–Thr145. Residues Thr230–Asp239 show a composition bias toward low complexity.

It belongs to the LEA type 4 family.

Functionally, lea proteins are late embryonic proteins abundant in higher plant seed embryos. This Brassica napus (Rape) protein is Late embryogenesis abundant protein 76.